We begin with the raw amino-acid sequence, 554 residues long: Carboxypeptidase Y homolog A (554 aa).

Residues 1–17 (MRISASTVLLGAASAAS) form the signal peptide. Positions 18–137 (AASFQNQAQH…QLDNFNLRVK (120 aa)) are excised as a propeptide. Cystine bridges form between cysteine 191/cysteine 431, cysteine 325/cysteine 339, cysteine 349/cysteine 372, cysteine 356/cysteine 365, and cysteine 394/cysteine 401. N-linked (GlcNAc...) asparagine glycosylation is present at asparagine 222. The active site involves serine 278. Aspartate 470 is a catalytic residue. Residue asparagine 518 is glycosylated (N-linked (GlcNAc...) asparagine). Histidine 529 is an active-site residue.

The protein belongs to the peptidase S10 family.

It localises to the vacuole. It catalyses the reaction Release of a C-terminal amino acid with broad specificity.. Functionally, vacuolar carboxypeptidase involved in degradation of small peptides. Digests preferentially peptides containing an aliphatic or hydrophobic residue in P1' position, as well as methionine, leucine or phenylalanine in P1 position of ester substrate. The chain is Carboxypeptidase Y homolog A (cpyA) from Neurospora crassa (strain ATCC 24698 / 74-OR23-1A / CBS 708.71 / DSM 1257 / FGSC 987).